Here is a 270-residue protein sequence, read N- to C-terminus: Phosphatidylglycerol--prolipoprotein diacylglyceryl transferase (270 aa).

A run of 7 helical transmembrane segments spans residues 10–30 (VAVAIGPLQIHWYGLMYLVGI), 56–76 (LIFWLAMGVIVGGRLGYVLFY), 92–112 (WKGGMAFHGGFVGVMIAAWWF), 120–140 (FFQLMDFVAPLVPIGLGAGRI), 175–195 (SQLYQFALEGVALFIILNLYA), 202–222 (MAVSGMFALFYGIFRFVVEFV), and 237–257 (VTMGQILSLPMIIAGLFLIWL). R139 contacts a 1,2-diacyl-sn-glycero-3-phospho-(1'-sn-glycerol).

The protein belongs to the Lgt family.

The protein localises to the cell inner membrane. The enzyme catalyses L-cysteinyl-[prolipoprotein] + a 1,2-diacyl-sn-glycero-3-phospho-(1'-sn-glycerol) = an S-1,2-diacyl-sn-glyceryl-L-cysteinyl-[prolipoprotein] + sn-glycerol 1-phosphate + H(+). It participates in protein modification; lipoprotein biosynthesis (diacylglyceryl transfer). Its function is as follows. Catalyzes the transfer of the diacylglyceryl group from phosphatidylglycerol to the sulfhydryl group of the N-terminal cysteine of a prolipoprotein, the first step in the formation of mature lipoproteins. In Pseudomonas savastanoi pv. phaseolicola (strain 1448A / Race 6) (Pseudomonas syringae pv. phaseolicola (strain 1448A / Race 6)), this protein is Phosphatidylglycerol--prolipoprotein diacylglyceryl transferase.